Here is a 675-residue protein sequence, read N- to C-terminus: DNA ligase 1 (675 aa).

Residues 34 to 38 (DFEYD), 83 to 84 (SL), and glutamate 114 contribute to the NAD(+) site. Residue lysine 116 is the N6-AMP-lysine intermediate of the active site. 4 residues coordinate NAD(+): arginine 137, glutamate 177, lysine 295, and lysine 319. Zn(2+) is bound by residues cysteine 413, cysteine 416, cysteine 431, and cysteine 436. The 80-residue stretch at 596–675 (NSGSALAGKT…AEFLRLLSGG (80 aa)) folds into the BRCT domain.

This sequence belongs to the NAD-dependent DNA ligase family. LigA subfamily. Mg(2+) is required as a cofactor. The cofactor is Mn(2+).

It carries out the reaction NAD(+) + (deoxyribonucleotide)n-3'-hydroxyl + 5'-phospho-(deoxyribonucleotide)m = (deoxyribonucleotide)n+m + AMP + beta-nicotinamide D-nucleotide.. DNA ligase that catalyzes the formation of phosphodiester linkages between 5'-phosphoryl and 3'-hydroxyl groups in double-stranded DNA using NAD as a coenzyme and as the energy source for the reaction. It is essential for DNA replication and repair of damaged DNA. This Opitutus terrae (strain DSM 11246 / JCM 15787 / PB90-1) protein is DNA ligase 1.